The following is a 372-amino-acid chain: Cytochrome b (372 aa).

4 helical membrane passes run 25–45 (FGSM…FLAI), 69–90 (WIMQ…YTHI), 105–125 (WLSG…GYVL), and 170–190 (FFAL…IHIM). Heme b is bound by residues H75 and H89. The heme b site is built by H174 and H188. A ubiquinone is bound at residue H193. Transmembrane regions (helical) follow at residues 218–238 (YKDM…MSFM), 280–300 (LGGT…PFTH), 312–332 (ITQV…WTAT), and 339–358 (FILI…IIHP).

This sequence belongs to the cytochrome b family. The cytochrome bc1 complex contains 3 respiratory subunits (MT-CYB, CYC1 and UQCRFS1), 2 core proteins (UQCRC1 and UQCRC2) and probably 6 low-molecular weight proteins. The cofactor is heme b.

It localises to the mitochondrion inner membrane. In terms of biological role, component of the ubiquinol-cytochrome c reductase complex (complex III or cytochrome b-c1 complex) that is part of the mitochondrial respiratory chain. The b-c1 complex mediates electron transfer from ubiquinol to cytochrome c. Contributes to the generation of a proton gradient across the mitochondrial membrane that is then used for ATP synthesis. The polypeptide is Cytochrome b (MT-CYB) (Pseudechis australis (Mulga snake)).